Consider the following 101-residue polypeptide: Small ribosomal subunit protein uS14 (101 aa).

Positions 1 to 10 (MAKKSSIEKN) are enriched in basic and acidic residues. Residues 1–23 (MAKKSSIEKNNRRKRMTGNAAAK) form a disordered region.

It belongs to the universal ribosomal protein uS14 family. As to quaternary structure, part of the 30S ribosomal subunit. Contacts proteins S3 and S10.

Binds 16S rRNA, required for the assembly of 30S particles and may also be responsible for determining the conformation of the 16S rRNA at the A site. The polypeptide is Small ribosomal subunit protein uS14 (Nitrobacter hamburgensis (strain DSM 10229 / NCIMB 13809 / X14)).